The chain runs to 514 residues: Putative ribose/galactose/methyl galactoside import ATP-binding protein 3 (514 aa).

ABC transporter domains lie at 21–256 (LRLD…VGRT) and 267–512 (VPTD…SGRS). 53–60 (GENGAGKS) provides a ligand contact to ATP.

It belongs to the ABC transporter superfamily. Carbohydrate importer 2 (CUT2) (TC 3.A.1.2) family.

Its subcellular location is the cell inner membrane. It carries out the reaction D-ribose(out) + ATP + H2O = D-ribose(in) + ADP + phosphate + H(+). The catalysed reaction is D-galactose(out) + ATP + H2O = D-galactose(in) + ADP + phosphate + H(+). In terms of biological role, part of an ABC transporter complex involved in carbohydrate import. Could be involved in ribose, galactose and/or methyl galactoside import. Responsible for energy coupling to the transport system. This is Putative ribose/galactose/methyl galactoside import ATP-binding protein 3 from Burkholderia cenocepacia (strain HI2424).